We begin with the raw amino-acid sequence, 281 residues long: 16S rRNA (guanine(1405)-N(7))-methyltransferase (281 aa).

S-adenosyl-L-methionine-binding positions include Y60, H105–S107, R111, G136, D160, Q186–G187, F203, and Q212.

It belongs to the methyltransferase superfamily. Aminoglycoside resistance family.

It catalyses the reaction guanosine(1405) in 16S rRNA + S-adenosyl-L-methionine = N(7)-methylguanosine(1405) in 16S rRNA + S-adenosyl-L-homocysteine. Specifically methylates the N(7) position of guanine 1405 in 16S rRNA. Confers resistance to various aminoglycosides, including gentamicin and kanamycin. The polypeptide is 16S rRNA (guanine(1405)-N(7))-methyltransferase (rmtC) (Proteus mirabilis).